The primary structure comprises 436 residues: MFESKINPLWQSFILAVQEEVKPALGCTEPISLALAAAAAAAELDGTVERIDAWVSPNLMKNGMGVTVPGTGMVGLPIAAALGALGGDAKAGLEVLKDASAKAVADAKAMLAAGHVAVMLQEPCNDILFSRAKVYSGDSWACVTIVGDHTNIVRIETDKGVVFTQADNAQEEEKNSPLGVLSHTSLEEILAFVNAVPFDAIRFILDAARLNGALSQEGLRGSWGLHIGSTLAKQCDRGLLAKDLSTAILIRTSAASDARMGGATLPAMSNSGSGNQGITATVPVMVVAEHVGADDERLARALMLSHLSAIYIHYQLPRLSALCAATTAAMGAAAGMAWLIDGRYDTIAMAISSMIGDVSGMICDGASNSCAMKVSTSASAAWKAVLMALDDTAVTGNEGIVAHNVEQSIANLCSLACRSMQQTDKQIIEIMASKAH.

This sequence belongs to the UPF0597 family.

The protein is UPF0597 protein YhaM of Salmonella paratyphi B (strain ATCC BAA-1250 / SPB7).